The sequence spans 109 residues: Large ribosomal subunit protein uL24 (109 aa).

It belongs to the universal ribosomal protein uL24 family. In terms of assembly, part of the 50S ribosomal subunit.

Functionally, one of two assembly initiator proteins, it binds directly to the 5'-end of the 23S rRNA, where it nucleates assembly of the 50S subunit. In terms of biological role, one of the proteins that surrounds the polypeptide exit tunnel on the outside of the subunit. This chain is Large ribosomal subunit protein uL24, found in Rickettsia massiliae (strain Mtu5).